The following is a 242-amino-acid chain: ATP synthase subunit a (242 aa).

Transmembrane regions (helical) follow at residues 29 to 49 (SAAY…LAFS), 84 to 104 (FVPV…FGMI), 114 to 134 (IIIT…VGFV), 140 to 160 (FLSL…MIII), 189 to 209 (VIAS…IPLM), and 210 to 230 (VILI…FTIL).

The protein belongs to the ATPase A chain family. F-type ATPases have 2 components, CF(1) - the catalytic core - and CF(0) - the membrane proton channel. CF(1) has five subunits: alpha(3), beta(3), gamma(1), delta(1), epsilon(1). CF(0) has three main subunits: a(1), b(2) and c(9-12). The alpha and beta chains form an alternating ring which encloses part of the gamma chain. CF(1) is attached to CF(0) by a central stalk formed by the gamma and epsilon chains, while a peripheral stalk is formed by the delta and b chains.

The protein resides in the cell inner membrane. Functionally, key component of the proton channel; it plays a direct role in the translocation of protons across the membrane. This is ATP synthase subunit a from Rickettsia bellii (strain OSU 85-389).